The primary structure comprises 278 residues: Adenosylcobinamide-GDP ribazoletransferase (278 aa).

7 helical membrane-spanning segments follow: residues 31 to 51 (AMAL…SAVF), 66 to 86 (TLLP…GLHL), 115 to 135 (TIGA…VGAL), 148 to 168 (ILVA…GAVP), 187 to 207 (DAAL…LLDF), 215 to 237 (ALRA…RYLL), and 247 to 267 (ILGG…AMTI).

The protein belongs to the CobS family. Mg(2+) is required as a cofactor.

It localises to the cell membrane. The enzyme catalyses alpha-ribazole + adenosylcob(III)inamide-GDP = adenosylcob(III)alamin + GMP + H(+). It carries out the reaction alpha-ribazole 5'-phosphate + adenosylcob(III)inamide-GDP = adenosylcob(III)alamin 5'-phosphate + GMP + H(+). It participates in cofactor biosynthesis; adenosylcobalamin biosynthesis; adenosylcobalamin from cob(II)yrinate a,c-diamide: step 7/7. Functionally, joins adenosylcobinamide-GDP and alpha-ribazole to generate adenosylcobalamin (Ado-cobalamin). Also synthesizes adenosylcobalamin 5'-phosphate from adenosylcobinamide-GDP and alpha-ribazole 5'-phosphate. The polypeptide is Adenosylcobinamide-GDP ribazoletransferase (Frankia casuarinae (strain DSM 45818 / CECT 9043 / HFP020203 / CcI3)).